Consider the following 226-residue polypeptide: UPF0758 protein PSEEN5431 (226 aa).

Residues 102–224 (VMDNPLAVRR…PLSMIEHGWL (123 aa)) form the MPN domain. Zn(2+)-binding residues include His173, His175, and Asp186. The JAMM motif motif lies at 173-186 (HNHPSGNCEPSQDD).

It belongs to the UPF0758 family.

The protein is UPF0758 protein PSEEN5431 of Pseudomonas entomophila (strain L48).